The sequence spans 472 residues: Sarcalumenin (472 aa).

The N-terminal stretch at 1 to 19 (MRALLLFCFVASLLLSGQA) is a signal peptide. A Dynamin-type G domain is found at 89 to 330 (ITSKPMVLFL…IENRLENKIA (242 aa)). The segment at 99 to 106 (GPWSVGKS) is G1 motif. N-linked (GlcNAc...) asparagine glycosylation occurs at Ser-102. Positions 127 to 128 (EP) are G2 motif. A G3 motif region spans residues 189–192 (DTPG). The segment at 254–257 (NKAD) is G4 motif. Pro-277 is a region of interest (G5 motif). Asn-280 and Asn-388 each carry an N-linked (GlcNAc...) asparagine glycan.

This sequence belongs to the TRAFAC class dynamin-like GTPase superfamily. Dynamin/Fzo/YdjA family. N-glycosylated. As to expression, detected in skeletal muscle.

Its subcellular location is the sarcoplasmic reticulum lumen. It is found in the sarcoplasmic reticulum membrane. The polypeptide is Sarcalumenin (SRL) (Oryctolagus cuniculus (Rabbit)).